A 231-amino-acid polypeptide reads, in one-letter code: Phosphoglycolate phosphatase (231 aa).

Asp-9 functions as the Nucleophile in the catalytic mechanism. Residues Asp-9 and Asp-11 each coordinate Mg(2+). The Proton donor role is filled by Asp-11. A substrate-binding site is contributed by Lys-154. Mg(2+) is bound by residues Asp-177 and Asp-181.

Belongs to the archaeal SPP-like hydrolase family. As to quaternary structure, homodimer. Mg(2+) serves as cofactor.

It carries out the reaction 2-phosphoglycolate + H2O = glycolate + phosphate. Catalyzes the dephosphorylation of 2-phosphoglycolate. Has phosphatase activity towards p-nitrophenylphosphate (in vitro). This chain is Phosphoglycolate phosphatase, found in Pyrococcus horikoshii (strain ATCC 700860 / DSM 12428 / JCM 9974 / NBRC 100139 / OT-3).